The chain runs to 130 residues: Small ribosomal subunit protein uS9 (130 aa).

The segment at 109-130 (RMKERRKYGLKKARKAPQFSKR) is disordered. A compositionally biased stretch (basic residues) spans 111–130 (KERRKYGLKKARKAPQFSKR).

Belongs to the universal ribosomal protein uS9 family.

The sequence is that of Small ribosomal subunit protein uS9 from Caldanaerobacter subterraneus subsp. tengcongensis (strain DSM 15242 / JCM 11007 / NBRC 100824 / MB4) (Thermoanaerobacter tengcongensis).